Reading from the N-terminus, the 140-residue chain is Nucleoside diphosphate kinase (140 aa).

ATP-binding residues include lysine 11, phenylalanine 59, arginine 87, threonine 93, arginine 104, and asparagine 114. Histidine 117 acts as the Pros-phosphohistidine intermediate in catalysis.

This sequence belongs to the NDK family. In terms of assembly, homotetramer. Mg(2+) serves as cofactor.

It localises to the cytoplasm. The catalysed reaction is a 2'-deoxyribonucleoside 5'-diphosphate + ATP = a 2'-deoxyribonucleoside 5'-triphosphate + ADP. The enzyme catalyses a ribonucleoside 5'-diphosphate + ATP = a ribonucleoside 5'-triphosphate + ADP. Major role in the synthesis of nucleoside triphosphates other than ATP. The ATP gamma phosphate is transferred to the NDP beta phosphate via a ping-pong mechanism, using a phosphorylated active-site intermediate. The sequence is that of Nucleoside diphosphate kinase from Rickettsia felis (strain ATCC VR-1525 / URRWXCal2) (Rickettsia azadi).